A 230-amino-acid polypeptide reads, in one-letter code: NEDD8-conjugating enzyme Ubc12 (230 aa).

The tract at residues 1 to 87 is disordered; sequence MFRLKELQKK…AELRAQKDID (87 aa). Positions 10–20 are enriched in low complexity; the sequence is KQQQQQQQQQQ. A compositionally biased stretch (polar residues) spans 26 to 36; that stretch reads TNGTDAVTTEP. Over residues 37 to 57 the composition is skewed to basic and acidic residues; sequence TDVKRQNSNDLKEIRKQKSKD. Over residues 61–70 the composition is skewed to polar residues; it reads SLKTKQSSES. In terms of domain architecture, UBC core spans 77–221; that stretch reads PAELRAQKDI…VRQSLRGGYI (145 aa). Cys-159 (glycyl thioester intermediate) is an active-site residue.

Belongs to the ubiquitin-conjugating enzyme family. UBC12 subfamily.

The enzyme catalyses [E1 NEDD8-activating enzyme]-S-[NEDD8 protein]-yl-L-cysteine + [E2 NEDD8-conjugating enzyme]-L-cysteine = [E1 NEDD8-activating enzyme]-L-cysteine + [E2 NEDD8-conjugating enzyme]-S-[NEDD8-protein]-yl-L-cysteine.. The protein operates within protein modification; protein neddylation. In terms of biological role, accepts the ubiquitin-like protein nedd8 from the uba3-nae1 E1 complex and catalyzes its covalent attachment to other proteins. This chain is NEDD8-conjugating enzyme Ubc12 (ube2m), found in Dictyostelium discoideum (Social amoeba).